A 172-amino-acid polypeptide reads, in one-letter code: MLSSLGNPRQAAAQLMNFALILSTAFMMWKGLSVITDSPSPIVVVLSGSMEPAFQRGDLLFLWNRNLLRETEVGEVVVYNVKDKDIPIVHRVVRKFGNGDTAELLTKGDNNLSDDTELYAKGQDYLERKDIIGSVVAYMPFVGYVTILLSEHPWLKTVMLGIMGLLVVLQRE.

The Cytoplasmic portion of the chain corresponds to 1–14; sequence MLSSLGNPRQAAAQ. The chain crosses the membrane as a helical; Signal-anchor for type II membrane protein span at residues 15-35; the sequence is LMNFALILSTAFMMWKGLSVI. Residues 36–172 lie on the Lumenal side of the membrane; the sequence is TDSPSPIVVV…MGLLVVLQRE (137 aa). Active-site charge relay system residues include serine 49 and histidine 90. Asparagine 111 carries N-linked (GlcNAc...) asparagine glycosylation. Aspartate 115 functions as the Charge relay system in the catalytic mechanism. Residues 158–169 are C-terminal short (CTS) helix; that stretch reads VMLGIMGLLVVL.

This sequence belongs to the peptidase S26B family. As to quaternary structure, component of the signal peptidase complex (SPC) composed of a catalytic subunit SEC11 and three accessory subunits SPC1, SPC2 and SPC3. The complex induces a local thinning of the ER membrane which is used to measure the length of the signal peptide (SP) h-region of protein substrates. This ensures the selectivity of the complex towards h-regions shorter than 18-20 amino acids. SPC associates with the translocon complex.

It localises to the endoplasmic reticulum membrane. It catalyses the reaction Cleavage of hydrophobic, N-terminal signal or leader sequences from secreted and periplasmic proteins.. In terms of biological role, catalytic component of the signal peptidase complex (SPC) which catalyzes the cleavage of N-terminal signal sequences from nascent proteins as they are translocated into the lumen of the endoplasmic reticulum. Specifically cleaves N-terminal signal peptides that contain a hydrophobic alpha-helix (h-region) shorter than 18-20 amino acids. The chain is Signal peptidase complex catalytic subunit SEC11 (SEC11) from Fusarium vanettenii (strain ATCC MYA-4622 / CBS 123669 / FGSC 9596 / NRRL 45880 / 77-13-4) (Fusarium solani subsp. pisi).